Consider the following 676-residue polypeptide: Probable ERAD-associated E3 ubiquitin-protein ligase ASI1 (676 aa).

Residues 1 to 78 (MSTNILQHVK…TLQLAKVGIR (78 aa)) lie on the Perinuclear space side of the membrane. 4 N-linked (GlcNAc...) asparagine glycosylation sites follow: asparagine 24, asparagine 34, asparagine 46, and asparagine 66. A helical membrane pass occupies residues 79–99 (MFFSYSVSKYAVLCFSTAIIL). Topologically, residues 100-126 (NRLTVMSSLRSNSTNIRLPLWSKTLLH) are nuclear. A helical membrane pass occupies residues 127–147 (LVATLSLVKALLQILSQFGLM). The Perinuclear space segment spans residues 148–156 (HELHVSDTD). The chain crosses the membrane as a helical span at residues 157 to 177 (FYALSVYLFVALSDCIEIFIS). Topologically, residues 178 to 181 (STTN) are nuclear. A helical transmembrane segment spans residues 182-202 (VPSLICSDFSIWGLSLNLYII). The Perinuclear space portion of the chain corresponds to 203 to 277 (SKMPAGQQHI…NICLIHNYFP (75 aa)). Residues 278–298 (GFFYISTILLASIGIFLKALF) traverse the membrane as a helical segment. The Nuclear segment spans residues 299–676 (TSNPFRSLYS…VKGYSKLNIV (378 aa)). The RING-type; atypical zinc-finger motif lies at 624–664 (CLICKVNKRNIVTWPCRCLALCDDCRISLGYKGFATCVSCD).

As to quaternary structure, component of the Asi complex, which contains ASI1, ASI2 and ASI3. Interacts directly with ASI1.

Its subcellular location is the nucleus inner membrane. The enzyme catalyses S-ubiquitinyl-[E2 ubiquitin-conjugating enzyme]-L-cysteine + [acceptor protein]-L-lysine = [E2 ubiquitin-conjugating enzyme]-L-cysteine + N(6)-ubiquitinyl-[acceptor protein]-L-lysine.. Its function is as follows. Part of the nuclear inner membrane (INM)-specific branch of the ER-associated degradation (ERAD) pathway, required for the elimination of misfolded proteins in the INM, a specialized ER subdomain. Required for ERG11 degradation. Negative regulator of SPS-sensor signaling. Together with ASI2 and ASI3, prevents the unprocessed precursor forms of STP1 and STP2 that escape cytoplasmic anchoring from inducing SPS-sensor-regulated genes in the absence of inducing signals. Controls amino acid permease (AAP) gene expression in response to amino acid availability, a process mediated by the transcription factors STP1 and STP1. This Saccharomyces cerevisiae (strain ATCC 204508 / S288c) (Baker's yeast) protein is Probable ERAD-associated E3 ubiquitin-protein ligase ASI1 (ASI3).